The chain runs to 401 residues: Subtilisin-like protease 7 (401 aa).

A signal peptide spans 1 to 20; sequence MGFITKAIPLALAAASVING. Residues 21-119 constitute a propeptide that is removed on maturation; sequence AEILETRAGV…IERDARVQIN (99 aa). One can recognise an Inhibitor I9 domain in the interval 36 to 118; that stretch reads KYIVVMNDGM…YIERDARVQI (83 aa). N-linked (GlcNAc...) asparagine glycosylation occurs at asparagine 58. The region spanning 129–401 is the Peptidase S8 domain; it reads SWGLARVGSR…SKLINNGSGM (273 aa). Active-site charge relay system residues include aspartate 161 and histidine 193. N-linked (GlcNAc...) asparagine glycosylation is found at asparagine 223 and asparagine 253. The active-site Charge relay system is serine 347. N-linked (GlcNAc...) asparagine glycosylation is present at asparagine 397.

The protein belongs to the peptidase S8 family.

Its subcellular location is the secreted. In terms of biological role, secreted subtilisin-like serine protease with keratinolytic activity that contributes to pathogenicity. The protein is Subtilisin-like protease 7 (SUB7) of Trichophyton tonsurans (Scalp ringworm fungus).